Reading from the N-terminus, the 349-residue chain is MELINDFLNLTAPFFTFFGLCFFLPPFYFFKFLQSIFSTIFSENLYGKVVLITGASSGIGEQLAYEYACRGACLALTARRKNRLEEVAEIARELGSPNVVTVHADVSKPDDCRRIVDDTITHFGRLDHLVNNAGMTQISMFENIEDITRTKAVLDTNFWGSVYTTRAALPYLRQSNGKIVAMSSSAAWLTAPRMSFYNASKAALLSFFETMRIELGGDVHITIVTPGYIESELTQGKYFSGEGELIVNQDMRDVQVGPFPVASASGCAKSIVNGVCRKQRYVTEPSWFKVTYLWKVLCPELIEWGCRLLYMTGTGMSEDTALNKRIMDIPGVRSTLYPESIRTPEIKSD.

Residues 10 to 30 (LTAPFFTFFGLCFFLPPFYFF) traverse the membrane as a helical; Signal-anchor for type II membrane protein segment. NADP(+) is bound by residues 54-80 (GASSGIGEQLAYEYACRGACLALTARR) and Asp105. Substrate is bound at residue Ser184. Tyr197 acts as the Proton acceptor in catalysis. Residues 197–201 (YNASK) and Lys201 contribute to the NADP(+) site.

The protein belongs to the short-chain dehydrogenases/reductases (SDR) family. In terms of tissue distribution, expressed in the above-ground part of seedlings, especially in the vascular tissues. Also detected in the buds and silique pedicels. Highly induced in oil-accumulating tissues of maturing seeds.

The protein localises to the lipid droplet. It localises to the membrane. It catalyses the reaction an 11beta-hydroxysteroid + NADP(+) = an 11-oxosteroid + NADPH + H(+). It carries out the reaction 17beta-estradiol + NADP(+) = estrone + NADPH + H(+). The enzyme catalyses corticosterone + NADP(+) = 11-dehydrocorticosterone + NADPH + H(+). The catalysed reaction is cortisone + NADPH + H(+) = cortisol + NADP(+). In terms of biological role, catalyzes 11-beta, 17-beta-hydroxysteroid and reduces 17-beta-ketosteroids. Involved in regulating plant growth and development, probably promoting or mediating brassinosteroid effects. Plays a role during seed maturation. The protein is 11-beta-hydroxysteroid dehydrogenase 1A (HSD1) of Arabidopsis thaliana (Mouse-ear cress).